A 306-amino-acid chain; its full sequence is tRNA dimethylallyltransferase (306 aa).

11–18 (GPTAVGKS) provides a ligand contact to ATP. Residue 13-18 (TAVGKS) participates in substrate binding. The interval 35 to 38 (DSIQ) is interaction with substrate tRNA.

It belongs to the IPP transferase family. Monomer. Mg(2+) is required as a cofactor.

It carries out the reaction adenosine(37) in tRNA + dimethylallyl diphosphate = N(6)-dimethylallyladenosine(37) in tRNA + diphosphate. Its function is as follows. Catalyzes the transfer of a dimethylallyl group onto the adenine at position 37 in tRNAs that read codons beginning with uridine, leading to the formation of N6-(dimethylallyl)adenosine (i(6)A). This Borreliella burgdorferi (strain ZS7) (Borrelia burgdorferi) protein is tRNA dimethylallyltransferase.